The sequence spans 331 residues: MIDTSIPLVDLHRHLDGNVRVNTIWELGHQHGIALPADSLETLAPFVQIQGKETSLVAFLKKLDWMVGVLADLDAVKRVAYENVADAALSGLDYAELRFSPYYMAMNHKLPIEGVVEAVVDGVKAGLKDYNVKINLIGILSRSFGQAACTQELEGLLAHKQHLVAMDLAGDEMGFPGELFNEHFKRVRDADLAITAHAGEAAGSQSMWQAIQELGATRIGHGVNAIHDPKLMEYLAKHRIGIESCPTSNLHTSTVASYADHPFRTFMDAGVLINLNTDDPGVSAIDINHEYRIAKSELKLTDAELAQVQRNGVEMAFLSDSERKALYAAKV.

Zn(2+)-binding residues include histidine 12 and histidine 14. Residues histidine 14, aspartate 16, and glycine 170 each coordinate substrate. Histidine 197 is a binding site for Zn(2+). Glutamate 200 acts as the Proton donor in catalysis. Residue aspartate 278 coordinates Zn(2+). Aspartate 279 provides a ligand contact to substrate.

The protein belongs to the metallo-dependent hydrolases superfamily. Adenosine and AMP deaminases family. Adenosine deaminase subfamily. It depends on Zn(2+) as a cofactor.

It carries out the reaction adenosine + H2O + H(+) = inosine + NH4(+). The enzyme catalyses 2'-deoxyadenosine + H2O + H(+) = 2'-deoxyinosine + NH4(+). Functionally, catalyzes the hydrolytic deamination of adenosine and 2-deoxyadenosine. The protein is Adenosine deaminase of Shewanella baltica (strain OS155 / ATCC BAA-1091).